A 398-amino-acid chain; its full sequence is Elongation factor Tu (398 aa).

The tr-type G domain occupies 10 to 207; it reads KPHVNIGTIG…TVDEYIPEPE (198 aa). Positions 19–26 are G1; that stretch reads GHVDHGKT. 19-26 serves as a coordination point for GTP; that stretch reads GHVDHGKT. Mg(2+) is bound at residue Thr26. The interval 63–67 is G2; that stretch reads GITIN. The tract at residues 84–87 is G3; that stretch reads DAPG. Residues 84–88 and 139–142 contribute to the GTP site; these read DAPGH and NKVD. The G4 stretch occupies residues 139-142; that stretch reads NKVD. Residues 177–179 form a G5 region; sequence SAL.

It belongs to the TRAFAC class translation factor GTPase superfamily. Classic translation factor GTPase family. EF-Tu/EF-1A subfamily. Monomer.

The protein localises to the cytoplasm. It carries out the reaction GTP + H2O = GDP + phosphate + H(+). Its function is as follows. GTP hydrolase that promotes the GTP-dependent binding of aminoacyl-tRNA to the A-site of ribosomes during protein biosynthesis. The chain is Elongation factor Tu from Streptococcus pyogenes serotype M49 (strain NZ131).